The sequence spans 147 residues: Spermidine export protein MdtJ (147 aa).

4 helical membrane passes run 1 to 21, 31 to 51, 54 to 74, and 81 to 101; these read MIYW…TLSM, TGHV…SLAV, VALG…ITIF, and ETLS…ILLV. The segment covering 105–117 has biased composition (basic residues); it reads TRKPKQPNRHRGN. Residues 105 to 147 are disordered; that stretch reads TRKPKQPNRHRGNRPPSVQGLKTQTTGHHKGVAVESGEHHAAA.

Belongs to the drug/metabolite transporter (DMT) superfamily. Small multidrug resistance (SMR) (TC 2.A.7.1) family. MdtJ subfamily. In terms of assembly, forms a complex with MdtI.

The protein resides in the cell inner membrane. Its function is as follows. Catalyzes the excretion of spermidine. The protein is Spermidine export protein MdtJ of Yersinia pseudotuberculosis serotype IB (strain PB1/+).